A 947-amino-acid chain; its full sequence is Serine/threonine-protein kinase PKH2 (947 aa).

The segment covering 1 to 14 (MHKFRYSLHQHYSK) has biased composition (basic residues). Disordered regions lie at residues 1–43 (MHKF…SSSS), 108–132 (SLGNTTNETGESIAKSAPGTPLSSH), and 162–212 (FNHL…NEEN). The segment covering 108–117 (SLGNTTNETG) has biased composition (polar residues). Residues 187 to 198 (NTEEEENNDDTD) are compositionally biased toward acidic residues. Basic and acidic residues predominate over residues 199–212 (EIPKSETLKQNEEN). In terms of domain architecture, Protein kinase spans 240–502 (FKFGKELGEG…IPEIQKHYFF (263 aa)). ATP contacts are provided by residues 250 to 252 (SYS) and Lys269. The tract at residues 271–316 (LDKRHIIKEKKVKYVNIEKHALNRLSNRLGVISLYFTFQDKDSLYF) is PIF-pocket. Residues 319 to 321 (DYA) and Glu325 contribute to the ATP site. Asp364 serves as the catalytic Proton acceptor. Residues Glu368 and Asp382 each contribute to the ATP site. Low complexity-rich tracts occupy residues 550 to 579 (VKKSTNSNSNTNNVATAVGGSSSNGHKGSS) and 618 to 632 (SSTSEDSSKRSSNSN). 4 disordered regions span residues 550 to 598 (VKKS…STEK), 611 to 644 (KPATNQNSSTSEDSSKRSSNSNETRKLSYSQQDY), 660 to 686 (SVGSYVKTTPSKDRKTLTKVPSNIHQQ), and 794 to 816 (NMKRSPTSDSKKSMDIERSASTS). The span at 802 to 811 (DSKKSMDIER) shows a compositional bias: basic and acidic residues.

Belongs to the protein kinase superfamily. AGC Ser/Thr protein kinase family. PDPK1 subfamily.

It is found in the nucleus. It localises to the cytoplasm. The protein resides in the cell cortex. The catalysed reaction is L-seryl-[protein] + ATP = O-phospho-L-seryl-[protein] + ADP + H(+). It catalyses the reaction L-threonyl-[protein] + ATP = O-phospho-L-threonyl-[protein] + ADP + H(+). In terms of biological role, serine/threonine-protein kinase which is part sphingolipid-mediated signaling pathway that is required for the internalization step of endocytosis by regulating eisosome assembly and organization, and modulating the organization of the plasma membrane. Phosphorylates and activates PKC1. Activates YPK1 and YPK2, 2 components of signaling cascade required for maintenance of cell wall integrity. Required for stress-induced P-body assembly and regulates global mRNA decay at the deadenylation step. The protein is Serine/threonine-protein kinase PKH2 of Candida albicans (strain SC5314 / ATCC MYA-2876) (Yeast).